A 453-amino-acid polypeptide reads, in one-letter code: MDQTAIQAADAEAATANRLKYMPGFGNDFETESLPGALPQGQNSPQKCNYGLYAEQLSGSPFTAPRGTNERSWLYRIRPSVRHTRRFSNASYPLWKTAPCLDEHSLPLGQLRWDPIPAPEEKLTFLQGVRTMTTAGDAATQVGMSAHAYVFNEDMVDDYFFDADGELLIVPQLGAIRVFTEMGIMDVEPLEICLVPRGMMFKVMTTGEQTASRGYICENYGAKFTLPDRGPIGANCLANPRDFKTPVAAFEDKEKPCRVHVKWCGKFYVTEIGHSPLDVVAWHGNYAPYKYDLRTFSPVGAISFDHPDPSIFSVLTAPTEDAGTANVDFVIFPPRWLVAEHTFRPPWYHRNIMSEFMGLIHGQYDAKEEGFVPGGISLHNMMLPHGPDALAFEKASNVELKPVKLDHTMAFMFETRYPQQLTKYAAELETLQDDYLECWDGLERKFDGTPGIK.

His306 functions as the Proton acceptor in the catalytic mechanism. Residues His349 and Glu355 each coordinate Fe cation. Tyr364 and His385 together coordinate homogentisate. His385 contacts Fe cation.

This sequence belongs to the homogentisate dioxygenase family. Hexamer; dimer of trimers. The cofactor is Fe cation.

The catalysed reaction is homogentisate + O2 = 4-maleylacetoacetate + H(+). The protein operates within amino-acid degradation; L-phenylalanine degradation; acetoacetate and fumarate from L-phenylalanine: step 4/6. Its function is as follows. Involved in the catabolism of homogentisate (2,5-dihydroxyphenylacetate or 2,5-OH-PhAc), a central intermediate in the degradation of phenylalanine and tyrosine. Catalyzes the oxidative ring cleavage of the aromatic ring of homogentisate to yield maleylacetoacetate. In Rhizobium etli (strain ATCC 51251 / DSM 11541 / JCM 21823 / NBRC 15573 / CFN 42), this protein is Homogentisate 1,2-dioxygenase.